The sequence spans 904 residues: MRGGGLICALVVGALVAAVASAAPAAPAAPRASGGVAATVAANGGPASRPPPVPSPATTKARKRKTKKPPKRPEATPPPDANATVAAGHATLRAHLREIKVENADAQFYVCPPPTGATVVQFEQPRRCPTRPEGQNYTEGIAVVFKENIAPYKFKATMYYKDVTVSQVWFGHRYSQFMGIFEDRAPVPFEEVIDKINAKGVCRSTAKYVRNNMETTAFHRDDHETDMELKPAKVATRTSRGWHTTDLKYNPSRVEAFHRYGTTVNCIVEEVDARSVYPYDEFVLATGDFVYMSPFYGYREGSHTEHTSYAADRFKQVDGFYARDLTTKARATSPTTRNLLTTPKFTVAWDWVPKRPAVCTMTKWQEVDEMLRAEYGGSFRFSSDAISTTFTTNLTQYSLSRVDLGDCIGRDAREAIDRMFARKYNATHIKVGQPQYYLATGGFLIAYQPLLSNTLAELYVREYMREQDRKPRNATPAPLREAPSANASVERIKTTSSIEFARLQFTYNHIQRHVNDMLGRIAVAWCELQNHELTLWNEARKLNPNAIASATVGRRVSARMLGDVMAVSTCVPVAPDNVIVQNSMRVSSRPGTCYSRPLVSFRYEDQGPLIEGQLGENNELRLTRDALEPCTVGHRRYFIFGGGYVYFEEYAYSHQLSRADVTTVSTFIDLNITMLEDHEFVPLEVYTRHEIKDSGLLDYTEVQRRNQLHDLRFADIDTVIRADANAAMFAGLCAFFEGMGDLGRAVGKVVMGVVGGVVSAVSGVSSFMSNPFGALAVGLLVLAGLVAAFFAFRYVLQLQRNPMKALYPLTTKELKTSDPGGVGGEGEEGAEGGGFDEAKLAEAREMIRYMALVSAMERTEHKARKKGTSALLSSKVTNMVLRKRNKARYSPLHNEDEAGDEDEL.

The N-terminal stretch at 1–22 is a signal peptide; sequence MRGGGLICALVVGALVAAVASA. Residues 23-771 lie on the Virion surface side of the membrane; the sequence is APAAPAAPRA…SGVSSFMSNP (749 aa). Residues 40-83 are disordered; it reads VAANGGPASRPPPVPSPATTKARKRKTKKPPKRPEATPPPDANA. The span at 60–70 shows a compositional bias: basic residues; sequence KARKRKTKKPP. N-linked (GlcNAc...) asparagine; by host glycosylation is found at asparagine 82 and asparagine 136. 5 cysteine pairs are disulfide-bonded: cysteine 111/cysteine 570, cysteine 128/cysteine 526, cysteine 202/cysteine 266, cysteine 359/cysteine 407, and cysteine 593/cysteine 630. Involved in fusion and/or binding to host membrane stretches follow at residues 168-174 and 253-260; these read VWFGHRY and RVEAFHRY. 3 N-linked (GlcNAc...) asparagine; by host glycosylation sites follow: asparagine 393, asparagine 425, and asparagine 486. The disordered stretch occupies residues 467 to 490; it reads QDRKPRNATPAPLREAPSANASVE. N-linked (GlcNAc...) asparagine; by host glycosylation occurs at asparagine 671. 2 hydrophobic membrane proximal region regions span residues 716–769 and 728–768; these read IDTV…SFMS and MFAG…SSFM. Residues 772 to 792 traverse the membrane as a helical segment; that stretch reads FGALAVGLLVLAGLVAAFFAF. The Intravirion portion of the chain corresponds to 793–904; sequence RYVLQLQRNP…EDEAGDEDEL (112 aa). A disordered region spans residues 816 to 835; sequence TSDPGGVGGEGEEGAEGGGF. The short motif at 849–852 is the Golgi targeting element; the sequence is YMAL. The disordered stretch occupies residues 883-904; it reads KRNKARYSPLHNEDEAGDEDEL. An Internalization motif motif is present at residues 889–892; the sequence is YSPL.

Belongs to the herpesviridae glycoprotein B family. In terms of assembly, homotrimer; disulfide-linked. Binds to heparan sulfate proteoglycans. Interacts with gH/gL heterodimer.

The protein resides in the virion membrane. The protein localises to the host cell membrane. Its subcellular location is the host endosome membrane. It is found in the host Golgi apparatus membrane. Functionally, envelope glycoprotein that forms spikes at the surface of virion envelope. Essential for the initial attachment to heparan sulfate moieties of the host cell surface proteoglycans. Involved in fusion of viral and cellular membranes leading to virus entry into the host cell. Following initial binding to its host receptors, membrane fusion is mediated by the fusion machinery composed at least of gB and the heterodimer gH/gL. May be involved in the fusion between the virion envelope and the outer nuclear membrane during virion egress. The chain is Envelope glycoprotein B from Homo sapiens (Human).